Consider the following 252-residue polypeptide: tRNA1(Val) (adenine(37)-N6)-methyltransferase (252 aa).

This sequence belongs to the methyltransferase superfamily. tRNA (adenine-N(6)-)-methyltransferase family.

Its subcellular location is the cytoplasm. The enzyme catalyses adenosine(37) in tRNA1(Val) + S-adenosyl-L-methionine = N(6)-methyladenosine(37) in tRNA1(Val) + S-adenosyl-L-homocysteine + H(+). Specifically methylates the adenine in position 37 of tRNA(1)(Val) (anticodon cmo5UAC). The protein is tRNA1(Val) (adenine(37)-N6)-methyltransferase of Proteus mirabilis (strain HI4320).